The following is a 123-amino-acid chain: Guanine nucleotide exchange factor MSS4 (123 aa).

N-acetylmethionine is present on Met1. The MSS4 domain occupies 9–123 (ELVSAEGRNR…YVALERVSHE (115 aa)). Zn(2+) is bound by residues Cys23, Cys26, Cys94, and Cys97.

The protein belongs to the DSS4/MSS4 family. In terms of assembly, interacts with RAB8A. As to expression, ubiquitous.

Its function is as follows. Guanine-nucleotide-releasing protein that acts on members of the SEC4/YPT1/RAB subfamily. Stimulates GDP release from both YPT1, RAB3A and RAB10, but is less active on these proteins than on the SEC4 protein. Might play a general role in vesicular transport. This is Guanine nucleotide exchange factor MSS4 (Rabif) from Rattus norvegicus (Rat).